We begin with the raw amino-acid sequence, 608 residues long: Actin-interacting protein 1 (608 aa).

WD repeat units follow at residues 62-101, 106-149, 150-190, 193-232, 237-276, 323-362, 366-403, 444-483, 487-526, 531-570, and 575-607; these read EHSC…HLLK, PIAG…GEIS, GQSK…FKMT, DHSR…LVGE, AHKG…LVSE, GHNK…NDRI, GHGN…YTDY, PIKY…LEPK, DHLG…PAHN, FHSA…KHTI, and HPQS…HVEN.

This sequence belongs to the WD repeat AIP1 family. Expressed in pupal wing cells.

It is found in the cytoplasm. The protein localises to the cytoskeleton. Functionally, induces disassembly of actin filaments in conjunction with ADF/cofilin family proteins. Together with GMF, promotes Arp2/3-nucleated actin filament array disassembly. Essential for organismal and cell viability. Required for the development of normal wing cell planar polarity. In egg chambers and together with GMF, plays an important role in directional migration of border cell clusters. This is Actin-interacting protein 1 (flr) from Drosophila melanogaster (Fruit fly).